Here is a 368-residue protein sequence, read N- to C-terminus: Cytoskeleton protein RodZ (368 aa).

Over 1-111 (MNTEASQDQT…LGKKHKKRDG (111 aa)) the chain is Cytoplasmic. The HTH cro/C1-type domain maps to 19-79 (LRQARESLGL…KLVHLPEDEL (61 aa)). The segment at residues 30–49 (QQTVAERLCLKVSTIRDIEE) is a DNA-binding region (H-T-H motif). Residues 112–132 (WLMSFTWLIVLVVLGLTGAWW) traverse the membrane as a helical; Signal-anchor for type II membrane protein segment. The Periplasmic segment spans residues 133–368 (WQNHQAQQAE…RVARLTVGVE (236 aa)). Residues 151-243 (SAQLSQNGGQ…STEPVDTANT (93 aa)) form a disordered region. A compositionally biased stretch (low complexity) spans 193 to 221 (STSAVTNSATTSSATTSSVPTTSSVPKTT). Residues 229-243 (VPKTNSTEPVDTANT) are compositionally biased toward polar residues.

The protein belongs to the RodZ family.

The protein resides in the cell inner membrane. Functionally, cytoskeletal protein that is involved in cell-shape control through regulation of the length of the long axis. This Yersinia pseudotuberculosis serotype O:3 (strain YPIII) protein is Cytoskeleton protein RodZ.